A 357-amino-acid polypeptide reads, in one-letter code: Velvet complex subunit 2 (357 aa).

The region spanning 32–341 (RRAERKYKLE…AQQGIKIPIR (310 aa)) is the Velvet domain.

Belongs to the velvet family. VelB subfamily. Component of the heterotrimeric velvet complex composed of LAE1, VEL1 and VEL2; VEL1A acting as a bridging protein between LAE1 and VEL2. Forms a heterodimeric complex with VOS1; the formation of the VEL2-VOS1 complex is light-dependent.

It is found in the nucleus. The protein localises to the cytoplasm. Functionally, component of the velvet transcription factor complex that controls sexual/asexual developmental ratio in response to light, promoting sexual development in the darkness while stimulating asexual sporulation under illumination. The velvet complex acts as a global regulator for secondary metabolite gene expression. Component of the VEL2-VOS1 heterodimeric complex that plays a dual role in activating genes associated with spore maturation and repressing certain development-associated genes. The complex binds DNA through the DNA-binding domain of VOS1 that recognizes an 11-nucleotide consensus sequence 5'-CTGGCCGCGGC-3' consisting of two motifs in the promoters of key developmental regulatory genes. The VEL2-VOS1 complex is required for normal pseudothecium development and regulates asexual spore compartmentalization, pigmentation and germination. In Cochliobolus heterostrophus (strain C5 / ATCC 48332 / race O) (Southern corn leaf blight fungus), this protein is Velvet complex subunit 2.